Consider the following 334-residue polypeptide: MKYLVTGAAGFIGFHVSKRLLEAGHQVVGIDNLNDYYDVSLKQARLELLAQPGFQFHKIDLADREGMTDLFASGHFERVFISPHRLAVRYSLENPHAYADSNLTGFLNILEGCRHNKIQHLLYASSSSVYGLNRKMPFSTDDSVDHPVSLYAATKKANELMAHTYSHLYGLPATGLRFFTVYGPWGRPDMALFKFTKAMLEGKSIDVYNYGKMKRDFTYIDDIAEAIIRLQDVIPHADTQWTVETGTPAASIAPYRVYNIGNSSPVELMDYIQALEDALGIEAKKNMLPLQPGDVLETSADTKALYEVIGFTPETTVKDGVKNFVNWYRDFYKV.

A substrate-binding site is contributed by Ser126. Tyr151 functions as the Proton acceptor in the catalytic mechanism.

Belongs to the NAD(P)-dependent epimerase/dehydratase family. dTDP-glucose dehydratase subfamily.

This is an uncharacterized protein from Escherichia coli O111:H-.